The primary structure comprises 664 residues: UvrABC system protein C (664 aa).

Residues 63–141 enclose the GIY-YIG domain; the sequence is LRPGVYRMYD…IKRYRPPYNI (79 aa). The region spanning 254–289 is the UVR domain; the sequence is THVQKKLVTAMEQASNDLNYELAAVYRDRLKALAFI.

Belongs to the UvrC family. As to quaternary structure, interacts with UvrB in an incision complex.

The protein localises to the cytoplasm. Functionally, the UvrABC repair system catalyzes the recognition and processing of DNA lesions. UvrC both incises the 5' and 3' sides of the lesion. The N-terminal half is responsible for the 3' incision and the C-terminal half is responsible for the 5' incision. In Zymomonas mobilis subsp. mobilis (strain ATCC 31821 / ZM4 / CP4), this protein is UvrABC system protein C.